Here is a 525-residue protein sequence, read N- to C-terminus: GMP synthase [glutamine-hydrolyzing] (525 aa).

The Glutamine amidotransferase type-1 domain maps to 9-207 (RILILDFGSQ…VLGICGCEAL (199 aa)). Cysteine 86 acts as the Nucleophile in catalysis. Residues histidine 181 and glutamate 183 contribute to the active site. Positions 208–400 (WTSATIIEDA…LGLPYDMLYR (193 aa)) constitute a GMPS ATP-PPase domain. 235-241 (SGGVDSS) contacts ATP.

Homodimer.

It catalyses the reaction XMP + L-glutamine + ATP + H2O = GMP + L-glutamate + AMP + diphosphate + 2 H(+). It participates in purine metabolism; GMP biosynthesis; GMP from XMP (L-Gln route): step 1/1. Its function is as follows. Catalyzes the synthesis of GMP from XMP. This is GMP synthase [glutamine-hydrolyzing] from Yersinia pseudotuberculosis serotype IB (strain PB1/+).